We begin with the raw amino-acid sequence, 474 residues long: MSKKLLIKTWGCQMNEYDSSKMADLLNAANGYELTEEPEEADVLLLNTCSIREKAQEKVFHQLGRWKTLKDKKPGVVIGVGGCVATQEGDHIRERAPFVDVIFGPQTLHRLPEMIKQSQSEDAPVMDISFPEIEKFDSLPEPRAEGATAFVSIMEGCSKYCTYCVVPYTRGEEVSRPMDDVLYEIAQLAEQGVREVNLLGQNVNAYRGPTHDGEICSFAELLRLVASIDGIDRIRFTTSHPLEFTDDIIAVYEDTPELVSFLHLPVQSGSDRILTMMKRPHTGIEYKSIIRKLRKARPDIQISSDFIVGFPGESDKDFQDTMKLIKDVDFDMSFSFIFSPRPGTPAADYPCDLSEETKKERLYELQQQINAQAMRYSRLMLGTEQRVLVEGPSKKNLMELRARTENNRVVNFEGSADLIGQFVDVKITDVFANSLRGEIVRTEKDMDLRSVISPTQMMAKTRREDELGVATFTP.

Positions 3-120 (KKLLIKTWGC…LPEMIKQSQS (118 aa)) constitute an MTTase N-terminal domain. Positions 12, 49, 83, 157, 161, and 164 each coordinate [4Fe-4S] cluster. The Radical SAM core domain occupies 143-375 (RAEGATAFVS…QQQINAQAMR (233 aa)). The TRAM domain occupies 378–441 (RLMLGTEQRV…ANSLRGEIVR (64 aa)).

The protein belongs to the methylthiotransferase family. MiaB subfamily. Monomer. [4Fe-4S] cluster is required as a cofactor.

It is found in the cytoplasm. The catalysed reaction is N(6)-dimethylallyladenosine(37) in tRNA + (sulfur carrier)-SH + AH2 + 2 S-adenosyl-L-methionine = 2-methylsulfanyl-N(6)-dimethylallyladenosine(37) in tRNA + (sulfur carrier)-H + 5'-deoxyadenosine + L-methionine + A + S-adenosyl-L-homocysteine + 2 H(+). Its function is as follows. Catalyzes the methylthiolation of N6-(dimethylallyl)adenosine (i(6)A), leading to the formation of 2-methylthio-N6-(dimethylallyl)adenosine (ms(2)i(6)A) at position 37 in tRNAs that read codons beginning with uridine. This chain is tRNA-2-methylthio-N(6)-dimethylallyladenosine synthase, found in Vibrio vulnificus (strain CMCP6).